Here is a 140-residue protein sequence, read N- to C-terminus: ATP synthase epsilon chain (140 aa).

The protein belongs to the ATPase epsilon chain family. As to quaternary structure, F-type ATPases have 2 components, CF(1) - the catalytic core - and CF(0) - the membrane proton channel. CF(1) has five subunits: alpha(3), beta(3), gamma(1), delta(1), epsilon(1). CF(0) has three main subunits: a, b and c.

It is found in the cell membrane. In terms of biological role, produces ATP from ADP in the presence of a proton gradient across the membrane. The protein is ATP synthase epsilon chain of Baumannia cicadellinicola subsp. Homalodisca coagulata.